The primary structure comprises 217 residues: N-(5'-phosphoribosyl)anthranilate isomerase (217 aa).

This sequence belongs to the TrpF family.

It carries out the reaction N-(5-phospho-beta-D-ribosyl)anthranilate = 1-(2-carboxyphenylamino)-1-deoxy-D-ribulose 5-phosphate. Its pathway is amino-acid biosynthesis; L-tryptophan biosynthesis; L-tryptophan from chorismate: step 3/5. In Bacillus velezensis (strain DSM 23117 / BGSC 10A6 / LMG 26770 / FZB42) (Bacillus amyloliquefaciens subsp. plantarum), this protein is N-(5'-phosphoribosyl)anthranilate isomerase.